Consider the following 352-residue polypeptide: Photosystem II D2 protein (352 aa).

Residues 40–60 (CAFLSIGGWLTGTTFVTSWYT) traverse the membrane as a helical segment. H117 provides a ligand contact to chlorophyll a. Residues 124–140 (GFCLRQIEIARLVGIRP) traverse the membrane as a helical segment. Pheophytin a-binding residues include Q129 and N142. The helical transmembrane segment at 152 to 165 (VFVSVFLMYPLGQS) threads the bilayer. H197 contacts chlorophyll a. Residues 207–227 (GALLCAIHGATVENTLFQDGE) form a helical membrane-spanning segment. A plastoquinone is bound by residues H214 and F261. A Fe cation-binding site is contributed by H214. Position 268 (H268) interacts with Fe cation. Residues 278–294 (GLWMSSIGIVGLAFNLR) traverse the membrane as a helical segment.

The protein belongs to the reaction center PufL/M/PsbA/D family. In terms of assembly, PSII is composed of 1 copy each of membrane proteins PsbA, PsbB, PsbC, PsbD, PsbE, PsbF, PsbH, PsbI, PsbJ, PsbK, PsbL, PsbM, PsbT, PsbX, PsbY, PsbZ, Psb30/Ycf12, peripheral proteins PsbO, CyanoQ (PsbQ), PsbU, PsbV and a large number of cofactors. It forms dimeric complexes. The D1/D2 heterodimer binds P680, chlorophylls that are the primary electron donor of PSII, and subsequent electron acceptors. It shares a non-heme iron and each subunit binds pheophytin, quinone, additional chlorophylls, carotenoids and lipids. There is also a Cl(-1) ion associated with D1 and D2, which is required for oxygen evolution. The PSII complex binds additional chlorophylls, carotenoids and specific lipids. serves as cofactor.

It localises to the cellular thylakoid membrane. It catalyses the reaction 2 a plastoquinone + 4 hnu + 2 H2O = 2 a plastoquinol + O2. In terms of biological role, photosystem II (PSII) is a light-driven water:plastoquinone oxidoreductase that uses light energy to abstract electrons from H(2)O, generating O(2) and a proton gradient subsequently used for ATP formation. It consists of a core antenna complex that captures photons, and an electron transfer chain that converts photonic excitation into a charge separation. The D1/D2 (PsbA/PsbD) reaction center heterodimer binds P680, the primary electron donor of PSII as well as several subsequent electron acceptors. D2 is needed for assembly of a stable PSII complex. The protein is Photosystem II D2 protein of Trichodesmium erythraeum (strain IMS101).